We begin with the raw amino-acid sequence, 338 residues long: MTTLRLLISDSYDPWFNLAVEECIFRQMPATQRVLFLWRNADTVVIGRAQNPWKECNTRRMEEDNVRLARRSSGGGAVFHDLGNTCFTFMAGKPEYDKTISTHIVLAALNSLGVMADASGRNDLVVKTPDGDRKVSGSAYRETKDRGFHHGTLLLNADLSRLANYLNPDKKKLAAKGITSVRSRVANLTELLPGITHEQVCQAVTEAFFAHYGERVDAEVISPNKTPDLPNFAETFARQSSWEWNFGQAPAFSHLLDEHFTWGGVELHFDVEKGVITRAQVFTDSLNPAPLEALAGRLQGCQYRADVLEQACESLIAEFPAQKGELRELAAWMAQAVR.

Residues 29–216 (PATQRVLFLW…AFFAHYGERV (188 aa)) enclose the BPL/LPL catalytic domain. ATP contacts are provided by residues arginine 71, 76 to 79 (GAVF), and lysine 134. Lysine 134 contributes to the (R)-lipoate binding site.

It belongs to the LplA family. Monomer.

The protein resides in the cytoplasm. It carries out the reaction L-lysyl-[lipoyl-carrier protein] + (R)-lipoate + ATP = N(6)-[(R)-lipoyl]-L-lysyl-[lipoyl-carrier protein] + AMP + diphosphate + H(+). It participates in protein modification; protein lipoylation via exogenous pathway; protein N(6)-(lipoyl)lysine from lipoate: step 1/2. Its pathway is protein modification; protein lipoylation via exogenous pathway; protein N(6)-(lipoyl)lysine from lipoate: step 2/2. Functionally, catalyzes both the ATP-dependent activation of exogenously supplied lipoate to lipoyl-AMP and the transfer of the activated lipoyl onto the lipoyl domains of lipoate-dependent enzymes. This chain is Lipoate-protein ligase A, found in Salmonella paratyphi C (strain RKS4594).